The primary structure comprises 155 residues: MAIADNKKARFNYTIEEQFEAGMVLEGWEVKAIRAGQVQLTDGYVVVKDGELFLIGCRINPLRTASTHVHPQADRTKKLLMKKDEIRRLVGKVEQKGYTLVPLNLHYKGGRVKADIALAKGKDLHDKRETEKKRDWEREKGQLMRHKISSPRKDT.

Residues 123-142 (DLHDKRETEKKRDWEREKGQ) are compositionally biased toward basic and acidic residues. The segment at 123 to 155 (DLHDKRETEKKRDWEREKGQLMRHKISSPRKDT) is disordered. Residues 143–155 (LMRHKISSPRKDT) are compositionally biased toward basic residues.

Belongs to the SmpB family.

It is found in the cytoplasm. Required for rescue of stalled ribosomes mediated by trans-translation. Binds to transfer-messenger RNA (tmRNA), required for stable association of tmRNA with ribosomes. tmRNA and SmpB together mimic tRNA shape, replacing the anticodon stem-loop with SmpB. tmRNA is encoded by the ssrA gene; the 2 termini fold to resemble tRNA(Ala) and it encodes a 'tag peptide', a short internal open reading frame. During trans-translation Ala-aminoacylated tmRNA acts like a tRNA, entering the A-site of stalled ribosomes, displacing the stalled mRNA. The ribosome then switches to translate the ORF on the tmRNA; the nascent peptide is terminated with the 'tag peptide' encoded by the tmRNA and targeted for degradation. The ribosome is freed to recommence translation, which seems to be the essential function of trans-translation. The protein is SsrA-binding protein of Methylibium petroleiphilum (strain ATCC BAA-1232 / LMG 22953 / PM1).